Reading from the N-terminus, the 59-residue chain is Large ribosomal subunit protein bL32 (59 aa).

Residues 1 to 16 (MAVPKRKTSPSKRGMR) are compositionally biased toward basic residues. The disordered stretch occupies residues 1-59 (MAVPKRKTSPSKRGMRRSADALKAPTYIEDKNSGELRRPHHIDLKTGMYRGRSVLPPKD). The span at 28-44 (IEDKNSGELRRPHHIDL) shows a compositional bias: basic and acidic residues.

The protein belongs to the bacterial ribosomal protein bL32 family.

This chain is Large ribosomal subunit protein bL32, found in Bartonella quintana (strain Toulouse) (Rochalimaea quintana).